The following is a 216-amino-acid chain: Ribose-5-phosphate isomerase A (216 aa).

Residues 26–29 (TGST), 79–82 (DGAD), and 92–95 (KGGG) each bind substrate. E101 acts as the Proton acceptor in catalysis. K119 contacts substrate.

Belongs to the ribose 5-phosphate isomerase family. Homodimer.

The enzyme catalyses aldehydo-D-ribose 5-phosphate = D-ribulose 5-phosphate. The protein operates within carbohydrate degradation; pentose phosphate pathway; D-ribose 5-phosphate from D-ribulose 5-phosphate (non-oxidative stage): step 1/1. In terms of biological role, catalyzes the reversible conversion of ribose-5-phosphate to ribulose 5-phosphate. This is Ribose-5-phosphate isomerase A from Legionella pneumophila (strain Lens).